Consider the following 403-residue polypeptide: S-adenosylmethionine synthase (403 aa).

Residue histidine 17 coordinates ATP. A Mg(2+)-binding site is contributed by aspartate 19. Glutamate 45 lines the K(+) pocket. Residues glutamate 58 and glutamine 104 each coordinate L-methionine. The tract at residues 104–114 (QSPDIAQGVDT) is flexible loop. ATP is bound by residues 179-181 (DGK), 250-251 (KF), aspartate 259, 265-266 (RK), alanine 282, and lysine 286. Residue aspartate 259 coordinates L-methionine. Position 290 (lysine 290) interacts with L-methionine.

This sequence belongs to the AdoMet synthase family. In terms of assembly, homotetramer; dimer of dimers. The cofactor is Mg(2+). K(+) serves as cofactor.

Its subcellular location is the cytoplasm. The enzyme catalyses L-methionine + ATP + H2O = S-adenosyl-L-methionine + phosphate + diphosphate. Its pathway is amino-acid biosynthesis; S-adenosyl-L-methionine biosynthesis; S-adenosyl-L-methionine from L-methionine: step 1/1. Catalyzes the formation of S-adenosylmethionine (AdoMet) from methionine and ATP. The overall synthetic reaction is composed of two sequential steps, AdoMet formation and the subsequent tripolyphosphate hydrolysis which occurs prior to release of AdoMet from the enzyme. The protein is S-adenosylmethionine synthase of Mycobacterium bovis (strain BCG / Pasteur 1173P2).